We begin with the raw amino-acid sequence, 249 residues long: uncharacterized protein (249 aa).

11-34 provides a ligand contact to NADP(+); sequence IFGGRSQIGGELARRLAAGATMVL. Residue serine 142 coordinates substrate. Tyrosine 155 functions as the Proton acceptor in the catalytic mechanism.

This sequence belongs to the short-chain dehydrogenases/reductases (SDR) family.

This is an uncharacterized protein from Mycobacterium tuberculosis (strain ATCC 25618 / H37Rv).